The following is an 853-amino-acid chain: Dynein axonemal assembly factor 5 (853 aa).

Residue Ala2 is modified to N-acetylalanine. 9 HEAT repeats span residues 69-107 (GPWA…RAAR), 200-238 (HMQS…FGSG), 240-276 (SVDD…NLRD), 278-316 (YSFL…QWQQ), 374-412 (RVKA…DEEK), 597-636 (GEAL…RPKD), 694-732 (QEAQ…NSGD), 736-774 (PEKF…CIES), and 782-820 (QSSV…LFPD).

It belongs to the DNAAF5 family. In terms of assembly, interacts with DNAI2; probably involved in outer arm dynein assembly. In terms of tissue distribution, expressed in ciliated cells including ependymal cells lining the lateral ventricles and multiciliated epithelium of oviduct ampulla.

It is found in the cytoplasm. The protein resides in the cytoplasmic granule. Cytoplasmic protein involved in the delivery of the dynein machinery to the motile cilium. It is required for the assembly of the axonemal dynein inner and outer arms, two structures attached to the peripheral outer doublet A microtubule of the axoneme, that play a crucial role in cilium motility. This is Dynein axonemal assembly factor 5 from Mus musculus (Mouse).